The following is a 337-amino-acid chain: Geranylgeranyl pyrophosphate synthase subD (337 aa).

The isopentenyl diphosphate site is built by K53, R56, and H85. D92 and D96 together coordinate Mg(2+). A dimethylallyl diphosphate-binding site is contributed by R101. Isopentenyl diphosphate is bound at residue R102. Residues K179, T180, and Q219 each contribute to the dimethylallyl diphosphate site. Residue D222 coordinates Mg(2+). 3 residues coordinate dimethylallyl diphosphate: N226, K236, and K246.

The protein belongs to the FPP/GGPP synthase family. Mg(2+) serves as cofactor.

The catalysed reaction is isopentenyl diphosphate + dimethylallyl diphosphate = (2E)-geranyl diphosphate + diphosphate. The enzyme catalyses isopentenyl diphosphate + (2E)-geranyl diphosphate = (2E,6E)-farnesyl diphosphate + diphosphate. It carries out the reaction isopentenyl diphosphate + (2E,6E)-farnesyl diphosphate = (2E,6E,10E)-geranylgeranyl diphosphate + diphosphate. The protein operates within secondary metabolite biosynthesis; terpenoid biosynthesis. Geranylgeranyl pyrophosphate synthase; part of the gene cluster that mediates the biosynthesis of the immunosuppressants subglutinols, meroterpenoids consisting of an alpha-pyrone (4-hydroxy-5,6-dimethyl-2-pyrone) moiety attached to a decalin core fused to a five-membered cyclic ether carrying a prenylside chain. The first step of the pathway is the synthesis of the alpha-pyrone moiety by the polyketide synthase subA via condensation of one acetyl-CoA starter unit with 3 malonyl-CoA units and 2 methylations. The alpha-pyrone is then combined with geranylgeranyl pyrophosphate (GGPP) formed by the GGPP synthase subD through the action of the prenyltransferase subC to yield a linear alpha-pyrone diterpenoid. Subsequent steps in the subglutinol biosynthetic pathway involve the decalin core formation, which is thought to be initiated by the epoxidation of the C10-C11 olefin by the FAD-dependent oxidoreductase subE. The following cyclization cascade would be catalyzed by the terpene cyclase subB. Lastly, the FAD-dependent dehydrogenase subF probably catalyzes the five-membered cyclic ether formation to complete the formation of subglutinol A. Subsequent redox reactions appear to give rise to subglutinol C and D, however, it remains unclear which enzymes are responsible for these transformations. SubD may have secondary function in the conversion of the identified subglutinols to subglutinol analog 45, which seems to be the major product of the cluster. This is Geranylgeranyl pyrophosphate synthase subD from Metarhizium robertsii (strain ARSEF 23 / ATCC MYA-3075) (Metarhizium anisopliae (strain ARSEF 23)).